Reading from the N-terminus, the 280-residue chain is Phosphatidylserine decarboxylase proenzyme (280 aa).

Active-site charge relay system; for autoendoproteolytic cleavage activity residues include aspartate 86, histidine 143, and serine 246. The Schiff-base intermediate with substrate; via pyruvic acid; for decarboxylase activity role is filled by serine 246. At serine 246 the chain carries Pyruvic acid (Ser); by autocatalysis.

Belongs to the phosphatidylserine decarboxylase family. PSD-B subfamily. Prokaryotic type I sub-subfamily. In terms of assembly, heterodimer of a large membrane-associated beta subunit and a small pyruvoyl-containing alpha subunit. Pyruvate serves as cofactor. In terms of processing, is synthesized initially as an inactive proenzyme. Formation of the active enzyme involves a self-maturation process in which the active site pyruvoyl group is generated from an internal serine residue via an autocatalytic post-translational modification. Two non-identical subunits are generated from the proenzyme in this reaction, and the pyruvate is formed at the N-terminus of the alpha chain, which is derived from the carboxyl end of the proenzyme. The autoendoproteolytic cleavage occurs by a canonical serine protease mechanism, in which the side chain hydroxyl group of the serine supplies its oxygen atom to form the C-terminus of the beta chain, while the remainder of the serine residue undergoes an oxidative deamination to produce ammonia and the pyruvoyl prosthetic group on the alpha chain. During this reaction, the Ser that is part of the protease active site of the proenzyme becomes the pyruvoyl prosthetic group, which constitutes an essential element of the active site of the mature decarboxylase.

It localises to the cell membrane. The catalysed reaction is a 1,2-diacyl-sn-glycero-3-phospho-L-serine + H(+) = a 1,2-diacyl-sn-glycero-3-phosphoethanolamine + CO2. Its pathway is phospholipid metabolism; phosphatidylethanolamine biosynthesis; phosphatidylethanolamine from CDP-diacylglycerol: step 2/2. In terms of biological role, catalyzes the formation of phosphatidylethanolamine (PtdEtn) from phosphatidylserine (PtdSer). The chain is Phosphatidylserine decarboxylase proenzyme from Brevibacillus brevis (strain 47 / JCM 6285 / NBRC 100599).